A 394-amino-acid polypeptide reads, in one-letter code: Cell division protein FtsZ (394 aa).

GTP contacts are provided by residues 21 to 25 (GGGGN), 108 to 110 (GTG), glutamate 139, arginine 143, and aspartate 187.

This sequence belongs to the FtsZ family. In terms of assembly, homodimer. Polymerizes to form a dynamic ring structure in a strictly GTP-dependent manner. Interacts directly with several other division proteins. Interacts with the SulA inhibitor.

It is found in the cytoplasm. Its function is as follows. Essential cell division protein that forms a contractile ring structure (Z ring) at the future cell division site. The regulation of the ring assembly controls the timing and the location of cell division. One of the functions of the FtsZ ring is to recruit other cell division proteins to the septum to produce a new cell wall between the dividing cells. Binds GTP and shows GTPase activity. This Pseudomonas aeruginosa (strain ATCC 15692 / DSM 22644 / CIP 104116 / JCM 14847 / LMG 12228 / 1C / PRS 101 / PAO1) protein is Cell division protein FtsZ.